A 199-amino-acid polypeptide reads, in one-letter code: Peroxiredoxin-1 (199 aa).

The residue at position 2 (Ser2) is an N-acetylserine. The 160-residue stretch at 6 to 165 (AKIGHPAPNF…TLRLVQAFQF (160 aa)) folds into the Thioredoxin domain. Lys7 is subject to N6-acetyllysine; alternate. Lys7 is covalently cross-linked (Glycyl lysine isopeptide (Lys-Gly) (interchain with G-Cter in SUMO2); alternate). N6-acetyllysine is present on residues Lys16 and Lys27. At Ser32 the chain carries Phosphoserine. Lys35 is modified (N6-acetyllysine; alternate). Residue Lys35 is modified to N6-succinyllysine; alternate. The active-site Cysteine sulfenic acid (-SOH) intermediate is the Cys52. Thr90 is modified (phosphothreonine; by CDK1). A Glycyl lysine isopeptide (Lys-Gly) (interchain with G-Cter in SUMO2) cross-link involves residue Lys120. The residue at position 136 (Lys136) is an N6-acetyllysine. The interval 176 to 199 (GWKPGSDTIKPDVQKSKEYFSKQK) is disordered. Residues 184-199 (IKPDVQKSKEYFSKQK) show a composition bias toward basic and acidic residues. Lys185 is covalently cross-linked (Glycyl lysine isopeptide (Lys-Gly) (interchain with G-Cter in SUMO1)). An N6-acetyllysine modification is found at Lys197.

It belongs to the peroxiredoxin family. AhpC/Prx1 subfamily. Homodimer; disulfide-linked, upon oxidation. 5 homodimers assemble to form a ring-like decamer. Interacts with GDPD5; forms a mixed-disulfide with GDPD5. Interacts with SESN1 and SESN2. Interacts with FAM107A. Phosphorylated on Thr-90 during the M-phase, which leads to a more than 80% decrease in enzymatic activity. In terms of processing, acetylation increases reducing activity and resistance to superoxidation. Deacetylated by HDAC6 which decreases reducing activity. Post-translationally, the enzyme can be inactivated by further oxidation of the cysteine sulfenic acid (C(P)-SOH) to sulphinic acid (C(P)-SO2H) instead of its condensation to a disulfide bond. It can be reactivated by forming a transient disulfide bond with sulfiredoxin SRXN1, which reduces the cysteine sulfinic acid in an ATP- and Mg-dependent manner.

The protein resides in the cytoplasm. Its subcellular location is the melanosome. The enzyme catalyses a hydroperoxide + [thioredoxin]-dithiol = an alcohol + [thioredoxin]-disulfide + H2O. Thiol-specific peroxidase that catalyzes the reduction of hydrogen peroxide and organic hydroperoxides to water and alcohols, respectively. Plays a role in cell protection against oxidative stress by detoxifying peroxides and as sensor of hydrogen peroxide-mediated signaling events. Might participate in the signaling cascades of growth factors and tumor necrosis factor-alpha by regulating the intracellular concentrations of H(2)O(2). Reduces an intramolecular disulfide bond in GDPD5 that gates the ability to GDPD5 to drive postmitotic motor neuron differentiation. The protein is Peroxiredoxin-1 (PRDX1) of Homo sapiens (Human).